We begin with the raw amino-acid sequence, 139 residues long: Nucleoside diphosphate kinase (139 aa).

Lysine 11, phenylalanine 59, arginine 87, threonine 93, arginine 104, and asparagine 114 together coordinate ATP. The active-site Pros-phosphohistidine intermediate is histidine 117.

It belongs to the NDK family. In terms of assembly, homotetramer. Mg(2+) serves as cofactor.

Its subcellular location is the cytoplasm. The catalysed reaction is a 2'-deoxyribonucleoside 5'-diphosphate + ATP = a 2'-deoxyribonucleoside 5'-triphosphate + ADP. The enzyme catalyses a ribonucleoside 5'-diphosphate + ATP = a ribonucleoside 5'-triphosphate + ADP. Major role in the synthesis of nucleoside triphosphates other than ATP. The ATP gamma phosphate is transferred to the NDP beta phosphate via a ping-pong mechanism, using a phosphorylated active-site intermediate. The protein is Nucleoside diphosphate kinase of Wolbachia sp. subsp. Brugia malayi (strain TRS).